A 33-amino-acid chain; its full sequence is Photosystem II reaction center protein Psb30 (33 aa).

Residues 5–25 form a helical membrane-spanning segment; the sequence is VIAQLTVLTLMVVSGPLVIVL.

The protein belongs to the Psb30/Ycf12 family. PSII is composed of 1 copy each of membrane proteins PsbA, PsbB, PsbC, PsbD, PsbE, PsbF, PsbH, PsbI, PsbJ, PsbK, PsbL, PsbM, PsbT, PsbX, PsbY, PsbZ, Psb30/Ycf12, peripheral proteins of the oxygen-evolving complex and a large number of cofactors. It forms dimeric complexes.

The protein resides in the plastid. It is found in the chloroplast thylakoid membrane. Its function is as follows. A core subunit of photosystem II (PSII), probably helps stabilize the reaction center. This chain is Photosystem II reaction center protein Psb30, found in Pinus koraiensis (Korean pine).